A 180-amino-acid polypeptide reads, in one-letter code: Early nodulin-16 (180 aa).

The signal sequence occupies residues 1-22; that stretch reads MASSSPILLMIIFSMWLLISHS. The Phytocyanin domain maps to 25 to 129; sequence TDYLIGDSHN…GLKLAVVVQN (105 aa). N67 carries an N-linked (GlcNAc...) asparagine glycan. A disulfide bridge connects residues C83 and C117. N-linked (GlcNAc...) asparagine glycosylation occurs at N152. A lipid anchor (GPI-anchor amidated serine) is attached at S154. Residues 155 to 180 constitute a propeptide, removed in mature form; sequence GNKGGAAGLGFIMWLGVSLVMMMFLI.

It belongs to the early nodulin-like (ENODL) family. Expressed in developing nodules upon symbiosis with Sinorhizobium meliloti.

Its subcellular location is the symbiosome. It localises to the cell membrane. Its function is as follows. May act as a carbohydrate transporter. This Medicago truncatula (Barrel medic) protein is Early nodulin-16.